The sequence spans 113 residues: Translation initiation factor IF-1, chloroplastic (113 aa).

The region spanning 8 to 83 is the S1-like domain; it reads REKKNPREAK…SKGRIIYRLP (76 aa). A disordered region spans residues 86–113; that stretch reads DSKRIEDSKDSEDLKDSEDLKDTKDSKD.

Belongs to the IF-1 family. In terms of assembly, component of the 30S ribosomal translation pre-initiation complex which assembles on the 30S ribosome in the order IF-2 and IF-3, IF-1 and N-formylmethionyl-tRNA(fMet); mRNA recruitment can occur at any time during PIC assembly.

It is found in the plastid. Its subcellular location is the chloroplast. Functionally, one of the essential components for the initiation of protein synthesis. Stabilizes the binding of IF-2 and IF-3 on the 30S subunit to which N-formylmethionyl-tRNA(fMet) subsequently binds. Helps modulate mRNA selection, yielding the 30S pre-initiation complex (PIC). Upon addition of the 50S ribosomal subunit IF-1, IF-2 and IF-3 are released leaving the mature 70S translation initiation complex. The chain is Translation initiation factor IF-1, chloroplastic from Hordeum vulgare (Barley).